Consider the following 529-residue polypeptide: UDP-glucuronosyltransferase 2B1 (529 aa).

An N-terminal signal peptide occupies residues M1 to C23. N134 and N316 each carry an N-linked (GlcNAc...) asparagine glycan. Residues V494–T510 form a helical membrane-spanning segment.

Belongs to the UDP-glycosyltransferase family.

The protein localises to the endoplasmic reticulum membrane. The enzyme catalyses glucuronate acceptor + UDP-alpha-D-glucuronate = acceptor beta-D-glucuronoside + UDP + H(+). It catalyses the reaction 17beta-estradiol + UDP-alpha-D-glucuronate = 17beta-estradiol 17-O-(beta-D-glucuronate) + UDP + H(+). In terms of biological role, UDP-glucuronosyltransferase (UGT) that catalyzes phase II biotransformation reactions in which lipophilic substrates are conjugated with glucuronic acid to increase the metabolite's water solubility, thereby facilitating excretion into either the urine or bile. Essential for the elimination and detoxification of drugs, xenobiotics and endogenous compounds. Catalyzes the glucuronidation of the endogenous estrogen hormone estradiol. The polypeptide is UDP-glucuronosyltransferase 2B1 (Rattus norvegicus (Rat)).